Here is a 483-residue protein sequence, read N- to C-terminus: Glycogen synthase (483 aa).

Residue K15 coordinates ADP-alpha-D-glucose.

The protein belongs to the glycosyltransferase 1 family. Bacterial/plant glycogen synthase subfamily.

The enzyme catalyses [(1-&gt;4)-alpha-D-glucosyl](n) + ADP-alpha-D-glucose = [(1-&gt;4)-alpha-D-glucosyl](n+1) + ADP + H(+). The protein operates within glycan biosynthesis; glycogen biosynthesis. In terms of biological role, synthesizes alpha-1,4-glucan chains using ADP-glucose. The polypeptide is Glycogen synthase (Exiguobacterium sibiricum (strain DSM 17290 / CCUG 55495 / CIP 109462 / JCM 13490 / 255-15)).